A 325-amino-acid chain; its full sequence is Brain mitochondrial carrier protein 1 (325 aa).

6 helical membrane passes run 38–54 (GLNW…SIVA), 112–128 (LRQA…YQSL), 145–165 (MICG…TDVL), 199–215 (GVVP…GVEL), 240–256 (VSSF…SNPV), and 298–315 (GFWP…IFFI). Solcar repeat units follow at residues 42 to 131 (KPFV…LKRL), 139 to 224 (ETLL…TKKH), and 233 to 323 (DTIL…LKRL).

This sequence belongs to the mitochondrial carrier (TC 2.A.29) family. As to quaternary structure, homotetramer. Mainly expressed in brain, particularly abundant in cortex, hippocampus thalamus, amygdala and hypothalamus. Highly expressed in heart and kidney, but not liver or lung (at protein level). In the nervous system, expressed in cortex, basal ganglia, substantia nigra, cerebellum, and spinal cord (at protein level).

It localises to the mitochondrion inner membrane. It catalyses the reaction sulfite(in) + sulfate(out) = sulfite(out) + sulfate(in). The catalysed reaction is thiosulfate(in) + sulfate(out) = thiosulfate(out) + sulfate(in). It carries out the reaction sulfate(out) + phosphate(in) = sulfate(in) + phosphate(out). The enzyme catalyses oxalate(in) + sulfate(out) = oxalate(out) + sulfate(in). It catalyses the reaction malonate(in) + sulfate(out) = malonate(out) + sulfate(in). The catalysed reaction is maleate(in) + sulfate(out) = maleate(out) + sulfate(in). It carries out the reaction (S)-malate(in) + sulfate(out) = (S)-malate(out) + sulfate(in). The enzyme catalyses (3S)-citramalate(in) + sulfate(out) = (3S)-citramalate(out) + sulfate(in). It catalyses the reaction (3R)-citramalate(in) + sulfate(out) = (3R)-citramalate(out) + sulfate(in). The catalysed reaction is sulfate(out) + succinate(in) = sulfate(in) + succinate(out). It carries out the reaction (S,S)-tartrate(in) + sulfate(out) = (S,S)-tartrate(out) + sulfate(in). The enzyme catalyses (2R,3R)-tartrate(in) + sulfate(out) = (2R,3R)-tartrate(out) + sulfate(in). It catalyses the reaction D-aspartate(in) + sulfate(out) = D-aspartate(out) + sulfate(in). The catalysed reaction is L-aspartate(in) + sulfate(out) = L-aspartate(out) + sulfate(in). It carries out the reaction sulfate(in) = sulfate(out). The enzyme catalyses phosphate(in) = phosphate(out). It catalyses the reaction (S)-malate(out) = (S)-malate(in). The catalysed reaction is citrate(in) = citrate(out). It carries out the reaction L-aspartate(out) = L-aspartate(in). The enzyme catalyses L-glutamate(out) = L-glutamate(in). It catalyses the reaction H(+)(in) = H(+)(out). The catalysed reaction is chloride(in) = chloride(out). Its function is as follows. Transports inorganic anions (sulfate, sulfite, thiosulfate and phosphate) and, to a lesser extent, a variety of dicarboxylates (e.g. malonate, malate and citramalate) and, even more so, aspartate and glutamate and tricarboxylates. May catalyze the export of sulfite and thiosulfate (the hydrogen sulfide degradation products) from the mitochondria, thereby modulating the level of the hydrogen sulfide. Also can mediate a very low unidirectional transport of anions including sulfate, phosphate, (S)-malate, citrate, L-aspartate and L-glutamate. Maintains oxidative balance (through uncoupling activities) and ATP production (by modifying mitochondrial membrane potential). Is able to transport protons across lipid membranes. Also exhibits transmembrane chloride transport activity to a lesser extent. May modify mitochondrial respiratory efficiency and mitochondrial oxidant production. This Mus musculus (Mouse) protein is Brain mitochondrial carrier protein 1.